A 235-amino-acid polypeptide reads, in one-letter code: Sugar fermentation stimulation protein homolog (235 aa).

This sequence belongs to the SfsA family.

The polypeptide is Sugar fermentation stimulation protein homolog (Azotobacter vinelandii (strain DJ / ATCC BAA-1303)).